The chain runs to 302 residues: Ribosomal RNA small subunit methyltransferase H (302 aa).

Residues Gly36–His38, Asp56, Phe84, Asp99, and Gln106 contribute to the S-adenosyl-L-methionine site.

Belongs to the methyltransferase superfamily. RsmH family.

Its subcellular location is the cytoplasm. It carries out the reaction cytidine(1402) in 16S rRNA + S-adenosyl-L-methionine = N(4)-methylcytidine(1402) in 16S rRNA + S-adenosyl-L-homocysteine + H(+). Functionally, specifically methylates the N4 position of cytidine in position 1402 (C1402) of 16S rRNA. This Christiangramia forsetii (strain DSM 17595 / CGMCC 1.15422 / KT0803) (Gramella forsetii) protein is Ribosomal RNA small subunit methyltransferase H.